The sequence spans 796 residues: Fibroblast growth factor receptor 3 (796 aa).

The signal sequence occupies residues 1-19; the sequence is MLVWLCGLCLVTLAGGRSA. Over 20-358 the chain is Extracellular; sequence ARLPLTEGRP…AEPVPDVDTS (339 aa). The Ig-like C2-type 1 domain occupies 21–119; that stretch reads RLPLTEGRPT…VLRNVTVRVT (99 aa). A disulfide bridge connects residues Cys56 and Cys102. Residues Asn91 and Asn113 are each glycosylated (N-linked (GlcNAc...) asparagine). The interval 117-142 is disordered; it reads RVTDSPSSGDDEDDDEESESANAPKF. Residues 125–135 show a composition bias toward acidic residues; it reads GDDEDDDEESE. 2 consecutive Ig-like C2-type domains span residues 140–233 and 239–344; these read PKFT…YTLD and PHRP…AWLT. A disulfide bridge links Cys165 with Cys217. Residues Asn214, Asn251, Asn283, Asn304, and Asn317 are each glycosylated (N-linked (GlcNAc...) asparagine). The cysteines at positions 264 and 328 are disulfide-linked. Residues 359–379 form a helical membrane-spanning segment; it reads VSILAAAGCVAVVILVVIIIF. At 380 to 796 the chain is on the cytoplasmic side; that stretch reads TYKMKMPSKK…HQQYNGVIRT (417 aa). The Protein kinase domain maps to 457 to 746; that stretch reads LTLGKPLGEG…LTVTSTDEYL (290 aa). Residues 463-471 and Lys493 contribute to the ATP site; that span reads LGEGCFGQV. Catalysis depends on Asp602, which acts as the Proton acceptor. Phosphotyrosine; by autocatalysis occurs at positions 632, 633, 709, and 745.

Belongs to the protein kinase superfamily. Tyr protein kinase family. Fibroblast growth factor receptor subfamily. Monomer. Homodimer after ligand binding. In terms of processing, autophosphorylated. Binding of FGF family members together with heparan sulfate proteoglycan or heparin promotes receptor dimerization and autophosphorylation on tyrosine residues. Autophosphorylation occurs in trans between the two FGFR molecules present in the dimer. Undetectable in the adult skeletal muscle. Low levels of expression were detected in the liver, lung and kidney. Medium levels of expression were detected in the heart, spleen, intestine and eye. Highest expression is observed in the testis.

It localises to the cell membrane. It carries out the reaction L-tyrosyl-[protein] + ATP = O-phospho-L-tyrosyl-[protein] + ADP + H(+). Present in an inactive conformation in the absence of bound ligand. Ligand binding leads to dimerization and activation by autophosphorylation on tyrosine residues. In terms of biological role, tyrosine-protein kinase that acts as a cell-surface receptor for fibroblast growth factors and plays an essential role in the regulation of cell proliferation, differentiation and apoptosis. Plays an essential role in the regulation of chondrocyte differentiation, proliferation and apoptosis, and is required for normal skeleton development. Regulates both osteogenesis and postnatal bone mineralization by osteoblasts. Promotes apoptosis in chondrocytes, but can also promote cancer cell proliferation. Phosphorylates PLCG1, CBL and FRS2. Ligand binding leads to the activation of several signaling cascades. Activation of PLCG1 leads to the production of the cellular signaling molecules diacylglycerol and inositol 1,4,5-trisphosphate. Phosphorylation of FRS2 triggers recruitment of GRB2, GAB1, PIK3R1 and SOS1, and mediates activation of RAS, MAPK1/ERK2, MAPK3/ERK1 and the MAP kinase signaling pathway, as well as of the AKT1 signaling pathway. In Pleurodeles waltl (Iberian ribbed newt), this protein is Fibroblast growth factor receptor 3 (FGFR3).